We begin with the raw amino-acid sequence, 877 residues long: Dynamin (877 aa).

The Dynamin-type G domain occupies 23 to 289 (QLDLPQIAVV…LTNHIRDTLP (267 aa)). The tract at residues 33 to 40 (GGQSAGKS) is G1 motif. 33–41 (GGQSAGKSS) lines the GTP pocket. The segment at 59–61 (VTR) is G2 motif. The interval 131 to 134 (DLPG) is G3 motif. The interval 200–203 (TKLD) is G4 motif. GTP contacts are provided by residues 200 to 206 (TKLDLMD) and 231 to 234 (NRSQ). A G5 motif region spans residues 230 to 233 (VNRS). The region spanning 513 to 621 (QVIRKGHMVI…WKASFLRAGV (109 aa)) is the PH domain. 2 disordered regions span residues 623–648 (PEKQETQENGDESASEESSSDPQLER) and 740–834 (TVSS…SGAV). Over residues 630–641 (ENGDESASEESS) the composition is skewed to acidic residues. Residues 650 to 741 (VETIRNLVDS…IIGDVSMATV (92 aa)) enclose the GED domain. Phosphoserine is present on residues serine 756, serine 764, and serine 767. Residues 788 to 826 (PPLPPSTGRPAPAIPNRPGGGAPPLPGGRPGGSLPPPML) show a composition bias toward pro residues.

This sequence belongs to the TRAFAC class dynamin-like GTPase superfamily. Dynamin/Fzo/YdjA family.

The protein resides in the cytoplasm. Its subcellular location is the cytoskeleton. The catalysed reaction is GTP + H2O = GDP + phosphate + H(+). Functionally, microtubule-associated force-producing protein which is involved in the production of microtubule bundles and which is able to bind and hydrolyze GTP. Implicated in endocytic protein sorting. This is Dynamin (shi) from Drosophila melanogaster (Fruit fly).